The following is a 424-amino-acid chain: Tyrosine--tRNA ligase (424 aa).

Residue tyrosine 37 coordinates L-tyrosine. Positions proline 42–serine 51 match the 'HIGH' region motif. L-tyrosine contacts are provided by tyrosine 174 and glutamine 178. The 'KMSKS' region motif lies at lysine 234–threonine 238. Residue lysine 237 coordinates ATP. Positions serine 357 to aspartate 422 constitute an S4 RNA-binding domain.

Belongs to the class-I aminoacyl-tRNA synthetase family. TyrS type 1 subfamily. Homodimer.

The protein resides in the cytoplasm. The catalysed reaction is tRNA(Tyr) + L-tyrosine + ATP = L-tyrosyl-tRNA(Tyr) + AMP + diphosphate + H(+). Functionally, catalyzes the attachment of tyrosine to tRNA(Tyr) in a two-step reaction: tyrosine is first activated by ATP to form Tyr-AMP and then transferred to the acceptor end of tRNA(Tyr). The protein is Tyrosine--tRNA ligase of Chromobacterium violaceum (strain ATCC 12472 / DSM 30191 / JCM 1249 / CCUG 213 / NBRC 12614 / NCIMB 9131 / NCTC 9757 / MK).